The sequence spans 342 residues: Pre-mRNA-splicing factor 18 (342 aa).

It belongs to the PRP18 family. As to quaternary structure, interacts with the spliceosome. Part of a complex containing U4/U6 snRNPs.

It is found in the nucleus speckle. Participates in the second step of pre-mRNA splicing. The sequence is that of Pre-mRNA-splicing factor 18 (prpf18) from Xenopus laevis (African clawed frog).